Reading from the N-terminus, the 968-residue chain is Angiomotin-like protein 1 (968 aa).

Polar residues-rich tracts occupy residues 152–164 (VYQS…QGQE) and 177–187 (RSTQPQQNNEE). Positions 152–258 (VYQSARQEPQ…NRANSGQAHK (107 aa)) are disordered. Over residues 203–224 (GQQQQQQQQQQQQQQQQQQGQG) the composition is skewed to low complexity. A phosphoserine mark is found at serine 253, serine 281, and serine 307. The stretch at 271–291 (RSLSERIMQLSLERNGAKQHL) forms a coiled coil. The interval 285–343 (NGAKQHLPSSGNGKSFKAGGEPSPAQPVCKALDPRGPPPEYPFKTKPMKSPVSKNQDHG) is disordered. Coiled-coil stretches lie at residues 449–645 (VERA…RRLR) and 676–705 (ALME…YLEE). The segment at 721–742 (AERDTTISNHSRNGSYGESSLE) is disordered. Polar residues predominate over residues 726-738 (TISNHSRNGSYGE). Residue serine 731 is modified to Phosphoserine. A coiled-coil region spans residues 748-773 (EEEEVVQANRRCQDMEYTIKNLHAKI). The segment at 785 to 834 (QRSRKDAGKTDSASLRPARSVPSIAAATGTHSRQTSLTSSQLTEEKKEEK) is disordered. A phosphoserine mark is found at serine 804, serine 816, and serine 840. The segment covering 853-878 (ASAPLLPTTPASALSLPASTTSASST) has biased composition (low complexity). A disordered region spans residues 853–956 (ASAPLLPTTP…GRVSNLLHKP (104 aa)). Phosphoserine is present on residues serine 912 and serine 918. Residues 965-968 (EVLI) carry the PDZ-binding motif.

Belongs to the angiomotin family. Post-translationally, polyubiquitinated by NEDD4, leading to proteasomal degradation. Expressed in exocrine glands, including pancreas, submandibular gland, lacrimal gland, parotid gland and sublingual gland (at protein level).

Its subcellular location is the cell junction. It is found in the tight junction. Inhibits the Wnt/beta-catenin signaling pathway, probably by recruiting CTNNB1 to recycling endosomes and hence preventing its translocation to the nucleus. This Mus musculus (Mouse) protein is Angiomotin-like protein 1 (Amotl1).